A 132-amino-acid polypeptide reads, in one-letter code: Small ribosomal subunit protein uS19 (132 aa).

It belongs to the universal ribosomal protein uS19 family.

Protein S19 forms a complex with S13 that binds strongly to the 16S ribosomal RNA. This is Small ribosomal subunit protein uS19 (rps19) from Pyrococcus horikoshii (strain ATCC 700860 / DSM 12428 / JCM 9974 / NBRC 100139 / OT-3).